The following is a 461-amino-acid chain: MGLPIVPGLLLSLVLLALLMGIHPSGVTGLVPSLGDREKRDNLCPQGKYAHPKNNSICCTKCHKGTYLVSDCPSPGQETVCEVCDKGTFTASQNHVRQCLSCKTCRKEMFQVEISPCKADMDTVCGCKKNQFQRYLSETHFQCVDCSPCFNGTVTIPCKEKQNTVCNCHAGFFLSGNECTPCSHCKKNQECMKLCLPPVANVTNPQDSGTAVLLPLVIFLGLCLLFFICISLLCRYPQWRPRVYSIICRDSAPVKEVEGEGIVTKPLTPASIPAFSPNPGFNPTLGFSTTPRFSHPVSSTPISPVFGPSNWHNFVPPVREVVPTQGADPLLYGSLNPVPIPAPVRKWEDVVAAQPQRLDTADPAMLYAVVDGVPPTRWKEFMRLLGLSEHEIERLELQNGRCLREAHYSMLEAWRRRTPRHEATLDVVGRVLCDMNLRGCLENIRETLESPAHSSTTHLPR.

The first 29 residues, 1–29 (MGLPIVPGLLLSLVLLALLMGIHPSGVTG), serve as a signal peptide directing secretion. The Extracellular portion of the chain corresponds to 30–211 (LVPSLGDREK…VTNPQDSGTA (182 aa)). TNFR-Cys repeat units follow at residues 43 to 82 (LCPQ…TVCE), 83 to 125 (VCDK…DTVC), 126 to 166 (GCKK…NTVC), and 167 to 196 (NCHA…KLCL). 12 cysteine pairs are disulfide-bonded: Cys44–Cys58, Cys59–Cys72, Cys62–Cys81, Cys84–Cys99, Cys102–Cys117, Cys105–Cys125, Cys127–Cys143, Cys146–Cys158, Cys149–Cys166, Cys168–Cys179, Cys182–Cys195, and Cys185–Cys191. An N-linked (GlcNAc...) asparagine glycan is attached at Asn54. Asn151 is a glycosylation site (N-linked (GlcNAc...) asparagine). Asn201 is a glycosylation site (N-linked (GlcNAc...) asparagine). A helical membrane pass occupies residues 212-234 (VLLPLVIFLGLCLLFFICISLLC). The Cytoplasmic segment spans residues 235–461 (RYPQWRPRVY…AHSSTTHLPR (227 aa)). An N-SMase activation domain (NSD) region spans residues 344-354 (VRKWEDVVAAQ). In terms of domain architecture, Death spans 363–448 (PAMLYAVVDG…GCLENIRETL (86 aa)).

Binding of TNF to the extracellular domain leads to homotrimerization. The aggregated death domains provide a novel molecular interface that interacts specifically with the death domain of TRADD. Various TRADD-interacting proteins such as TRAFS, RIPK1 and possibly FADD, are recruited to the complex by their association with TRADD. This complex activates at least two distinct signaling cascades, apoptosis and NF-kappa-B signaling. Interacts with BAG4, BABAM2, FEM1B, GRB2, SQSTM1 and TRPC4AP. Interacts with DAB2IP. Interacts directly with NOL3 (via CARD domain); inhibits TNF-signaling pathway. Interacts with SH3RF2, TRADD and RIPK1. SH3RF2 facilitates the recruitment of RIPK1 and TRADD to TNFRSF1A in a TNF-alpha-dependent process. Interacts with PGLYRP1; this interaction is important for cell death induction. Interacts (via death domain) with MADD (via death domain).

The protein localises to the cell membrane. It is found in the golgi apparatus membrane. Functionally, receptor for TNFSF2/TNF-alpha and homotrimeric TNFSF1/lymphotoxin-alpha. The adapter molecule FADD recruits caspase-8 to the activated receptor. The resulting death-inducing signaling complex (DISC) performs caspase-8 proteolytic activation which initiates the subsequent cascade of caspases (aspartate-specific cysteine proteases) mediating apoptosis. This is Tumor necrosis factor receptor superfamily member 1A (Tnfrsf1a) from Rattus norvegicus (Rat).